A 1323-amino-acid polypeptide reads, in one-letter code: ABC transporter gloK (1323 aa).

A run of 7 helical transmembrane segments spans residues 6–26, 102–122, 138–158, 217–237, 240–260, 325–345, and 359–379; these read AIASIFTAIVCFKFIILTLEA, PHALLKVMLATFKGLLLAGIL, VAYGLIAAYAIVYIGIAVMST, IWASLIEIALSLWLLEVRLGV, VAAVFVIIGNICTLLGCVFGF, LLVGIVTLSYVSTTMAPVFAF, and PLLAASAYTSLTIFSLLGQAV. Residues 142–380 form the ABC transmembrane type-1 1 domain; it reads LIAAYAIVYI…IFSLLGQAVS (239 aa). One can recognise an ABC transporter 1 domain in the interval 471–697; sequence IRDCSACWSK…SSYLESLGTR (227 aa). 503–510 is a binding site for ATP; that stretch reads GPIGSGKS. The next 7 helical transmembrane spans lie at 748-768, 795-815, 821-841, 859-879, 891-910, 976-996, and 1006-1026; these read GWVTWWVFVLLCSGFVFGLVF, YALWPLMAIVIFLGACAWLMI, AAIQFHGILLNSALSAPLVYF, LIDMELPTALIGTTVTFLSCI, YVAAAIPALIVFLYYIQLFY, LNLTLELAVAFLAIILVSIAL, and IGVALLSIVGFGLNLKTLVYT. One can recognise an ABC transmembrane type-1 2 domain in the interval 752 to 1031; that stretch reads WWVFVLLCSG…TLVYTWTSLE (280 aa). An ABC transporter 2 domain is found at 1069 to 1300; the sequence is IRFQSVSAAY…PSFFASLLKA (232 aa). Residue 1103–1110 participates in ATP binding; it reads GRTGSGKS.

The protein belongs to the ABC transporter superfamily. ABCC family. Conjugate transporter (TC 3.A.1.208) subfamily.

It is found in the cell membrane. 3-isopropylmalate dehydratase large subunit; part of the gene cluster that mediates the biosynthesis of pneumocandins, lipohexapeptides of the echinocandin family that prevent fungal cell wall formation by non-competitive inhibition of beta-1,3-glucan synthase. Possibly secretes antifungal pneumocandins, thus avoiding of intracellular accumulation and ameliorating the toxicity to the producing cells. The protein is ABC transporter gloK of Glarea lozoyensis (strain ATCC 20868 / MF5171).